A 622-amino-acid polypeptide reads, in one-letter code: Dynein axonemal assembly factor 1 (622 aa).

The interval 1–80 (MHPEVSEPQA…ARNDRDDRGP (80 aa)) is disordered. Basic and acidic residues predominate over residues 22 to 42 (AGDHGRAGPGVRKEEINETKE). Residues 48-59 (STTSCQSQKQQS) are compositionally biased toward low complexity. Residues 62-80 (SRLDCRSGYARNDRDDRGP) are compositionally biased toward basic and acidic residues. LRR repeat units lie at residues 101–123 (ALND…EEYT), 124–145 (GLRC…QAQS), 146–167 (ELRC…EPLQ), 168–189 (KLDA…SCLP), 190–211 (VLNT…QHLR), and 215–236 (RLCV…SVLE). In terms of domain architecture, LRRCT spans 249 to 288 (NPVTKHIPNYRRTVTVRLKQLTYLDDRPVFPKDRACAEAW). The span at 326-336 (EERKKARDKGE) shows a compositional bias: basic and acidic residues. The tract at residues 326 to 360 (EERKKARDKGETPLPDSEESSSTSPEAQDKPPLGE) is disordered. Residues 337 to 351 (TPLPDSEESSSTSPE) show a composition bias toward low complexity. A phosphoserine mark is found at serine 349, serine 464, and serine 487. Disordered stretches follow at residues 481–503 (SSLS…EHTP) and 540–622 (LETQ…FGLD). The segment covering 540–550 (LETQGQVFSTT) has biased composition (polar residues).

Belongs to the DNAAF1 family.

Its subcellular location is the cell projection. It localises to the cilium. Its function is as follows. Cilium-specific protein required for the stability of the ciliary architecture. Plays a role in cytoplasmic preassembly of dynein arms. Involved in regulation of microtubule-based cilia and actin-based brush border microvilli. This is Dynein axonemal assembly factor 1 (Dnaaf1) from Peromyscus leucopus (White-footed mouse).